A 708-amino-acid chain; its full sequence is Protein SUPPRESSOR OF MAX2 1A (708 aa).

The disordered stretch occupies residues 248-283; it reads QMASKPQEKAASPPGSPVRTDLVLGPKQTETTPEKT. The short motif at 537-541 is the EAR element; sequence FDLNE.

The protein belongs to the ClpA/ClpB family.

Its function is as follows. Probable component of a transcriptional corepressor complex that acts downstream of MAX2 to negatively regulate karrikins/strigolactone responses. Involved in the (-)-germacrene D signaling pathway influencing plant fitness and occurring in the stigma in a KAI2IA-dependent manner. The sequence is that of Protein SUPPRESSOR OF MAX2 1A from Petunia hybrida (Petunia).